Reading from the N-terminus, the 29-residue chain is Small ribosomal subunit protein uS7 (29 aa).

A disordered region spans residues 1–29 (ELIGAANRDTKSFSINRKDAKERVAKAAR). Over residues 8-29 (RDTKSFSINRKDAKERVAKAAR) the composition is skewed to basic and acidic residues.

Belongs to the universal ribosomal protein uS7 family. As to quaternary structure, part of the 30S ribosomal subunit.

Its function is as follows. One of the primary rRNA binding proteins, it binds directly to 16S rRNA where it nucleates assembly of the head domain of the 30S subunit. Is located at the subunit interface close to the decoding center. The protein is Small ribosomal subunit protein uS7 (rps7) of Methanosarcina thermophila.